The following is a 345-amino-acid chain: MPELTRFQKFFLTPEKFNKFTRVVGFCGVFALIALSLGIYSYVGQGSIVPKVAALFLIALGGFTLLLSFVINFVALYKRSQLIHLVNRQDRTDLWLQKMANNKQFEQFELFEKGPISADILPTFYPATIYNFELVPKQFKVQYKNGQTLNFAKLSAIKRSTSKNEKVACLVAIIDAVSDQHWFLTKSDFPLINTGFYESLTESNRQNNVLLYTEKDASFNFNQLDKEMIKQVLFNPVNVYANFNVYNNTTHTYLMMSVPITFMDTSLRMEEAVGDLELNITRQAGYDAATLDSFHKVVELLKTKLIGDFNNAETTSATETTVVAEVTEPTTNSKRKPVKAKKAKK.

A run of 2 helical transmembrane segments spans residues 23–43 and 56–76; these read VVGFCGVFALIALSLGIYSYV and FLIALGGFTLLLSFVINFVAL. The segment at 326–345 is disordered; that stretch reads VTEPTTNSKRKPVKAKKAKK. Basic residues predominate over residues 333–345; the sequence is SKRKPVKAKKAKK.

The protein localises to the cell membrane. This is an uncharacterized protein from Mycoplasma pneumoniae (strain ATCC 29342 / M129 / Subtype 1) (Mycoplasmoides pneumoniae).